The chain runs to 524 residues: GMP synthase [glutamine-hydrolyzing] (524 aa).

Residues 9 to 207 (RILILDFSSQ…VIHICQCIPN (199 aa)) form the Glutamine amidotransferase type-1 domain. Cysteine 86 acts as the Nucleophile in catalysis. Catalysis depends on residues histidine 181 and glutamate 183. A GMPS ATP-PPase domain is found at 208-399 (WTTKHIIEDS…LGLPADLIYR (192 aa)). 235 to 241 (SGGVDSA) contacts ATP.

In terms of assembly, homodimer.

It carries out the reaction XMP + L-glutamine + ATP + H2O = GMP + L-glutamate + AMP + diphosphate + 2 H(+). It participates in purine metabolism; GMP biosynthesis; GMP from XMP (L-Gln route): step 1/1. Its function is as follows. Catalyzes the synthesis of GMP from XMP. This Coxiella burnetii (strain Dugway 5J108-111) protein is GMP synthase [glutamine-hydrolyzing].